A 172-amino-acid polypeptide reads, in one-letter code: MSEEITNGAAAPVDAATGPAFTVEKIYVKDVSFESPNAPTIFNDQVQPELQLNLNQQVQRLGENAFEVVLAVTLTCQAGERTAYVAEVKQAGVFGLVGLDPQSIDVLLGTQCPNILFPYVRQLISDLIQAGGFPPFFLQPINFEGLYAETLRQRQEQGDAPSLADSEPAGNA.

This sequence belongs to the SecB family. Homotetramer, a dimer of dimers. One homotetramer interacts with 1 SecA dimer.

Its subcellular location is the cytoplasm. Functionally, one of the proteins required for the normal export of preproteins out of the cell cytoplasm. It is a molecular chaperone that binds to a subset of precursor proteins, maintaining them in a translocation-competent state. It also specifically binds to its receptor SecA. The polypeptide is Protein-export protein SecB (Stenotrophomonas maltophilia (strain K279a)).